A 205-amino-acid chain; its full sequence is MELKLSNEKGEAAGQLEVSDQAFDAPFRESLVHQVVTAHLAGARAGTKAQKTRSEVAGGGKKPWRQKGTGNARAGTIRSPLWRGGGQTFAAKPRDFSQKVNRKMYRGALRSILSELARQDRLVVVKQLTVDAPKTRELKARLEGLGVREGLIVVDEIDANLELAARNLPRLGVVDAAGVDPASLVGAERVVITESAIRRVEEWLS.

Residues 43–78 are disordered; the sequence is ARAGTKAQKTRSEVAGGGKKPWRQKGTGNARAGTIR.

Belongs to the universal ribosomal protein uL4 family. Part of the 50S ribosomal subunit.

Functionally, one of the primary rRNA binding proteins, this protein initially binds near the 5'-end of the 23S rRNA. It is important during the early stages of 50S assembly. It makes multiple contacts with different domains of the 23S rRNA in the assembled 50S subunit and ribosome. In terms of biological role, forms part of the polypeptide exit tunnel. The chain is Large ribosomal subunit protein uL4 from Halorhodospira halophila (strain DSM 244 / SL1) (Ectothiorhodospira halophila (strain DSM 244 / SL1)).